The sequence spans 378 residues: Chaperone protein DnaJ (378 aa).

In terms of domain architecture, J spans 3–67 (DYYDLLGVSK…QTRGRYDQFG (65 aa)). Residues 133–215 (GQEREIKIPH…CAGQGVRQVR (83 aa)) form a CR-type zinc finger. Positions 146, 149, 163, 166, 189, 192, 203, and 206 each coordinate Zn(2+). CXXCXGXG motif repeat units follow at residues 146-153 (CDTCNGTG), 163-170 (CSTCGGVG), 189-196 (CPSCEGTG), and 203-210 (CPACAGQG).

The protein belongs to the DnaJ family. In terms of assembly, homodimer. Zn(2+) serves as cofactor.

The protein resides in the cytoplasm. Participates actively in the response to hyperosmotic and heat shock by preventing the aggregation of stress-denatured proteins and by disaggregating proteins, also in an autonomous, DnaK-independent fashion. Unfolded proteins bind initially to DnaJ; upon interaction with the DnaJ-bound protein, DnaK hydrolyzes its bound ATP, resulting in the formation of a stable complex. GrpE releases ADP from DnaK; ATP binding to DnaK triggers the release of the substrate protein, thus completing the reaction cycle. Several rounds of ATP-dependent interactions between DnaJ, DnaK and GrpE are required for fully efficient folding. Also involved, together with DnaK and GrpE, in the DNA replication of plasmids through activation of initiation proteins. In Prochlorococcus marinus (strain MIT 9313), this protein is Chaperone protein DnaJ.